A 382-amino-acid polypeptide reads, in one-letter code: 2-epi-valiolone synthase (382 aa).

NAD(+)-binding positions include 92–95, 124–128, 148–149, K161, K170, and 188–191; these read EKSK, GVVVD, TT, and HLRT. Zn(2+) is bound by residues E203, H266, and H283.

The protein belongs to the sugar phosphate cyclases superfamily. EVS family. The cofactor is NAD(+). Requires Co(2+) as cofactor. Zn(2+) serves as cofactor.

The catalysed reaction is D-sedoheptulose 7-phosphate = 2-epi-valiolone + phosphate. Catalyzes the conversion of sedoheptulose 7-phosphate to 2-epi-valiolone, which may serve as an alternative precursor for aminocyclitol biosynthesis. In Actinosynnema mirum (strain ATCC 29888 / DSM 43827 / JCM 3225 / NBRC 14064 / NCIMB 13271 / NRRL B-12336 / IMRU 3971 / 101), this protein is 2-epi-valiolone synthase.